A 670-amino-acid polypeptide reads, in one-letter code: tRNA 5-methylaminomethyl-2-thiouridine biosynthesis bifunctional protein MnmC (670 aa).

The segment at 1–242 (MTFSVQHAEI…KRECLSGLKI (242 aa)) is tRNA (mnm(5)s(2)U34)-methyltransferase. The FAD-dependent cmnm(5)s(2)U34 oxidoreductase stretch occupies residues 269-670 (IGGGIASLCA…KKWLKGSKVE (402 aa)).

It in the N-terminal section; belongs to the methyltransferase superfamily. tRNA (mnm(5)s(2)U34)-methyltransferase family. This sequence in the C-terminal section; belongs to the DAO family. It depends on FAD as a cofactor.

It is found in the cytoplasm. The enzyme catalyses 5-aminomethyl-2-thiouridine(34) in tRNA + S-adenosyl-L-methionine = 5-methylaminomethyl-2-thiouridine(34) in tRNA + S-adenosyl-L-homocysteine + H(+). Catalyzes the last two steps in the biosynthesis of 5-methylaminomethyl-2-thiouridine (mnm(5)s(2)U) at the wobble position (U34) in tRNA. Catalyzes the FAD-dependent demodification of cmnm(5)s(2)U34 to nm(5)s(2)U34, followed by the transfer of a methyl group from S-adenosyl-L-methionine to nm(5)s(2)U34, to form mnm(5)s(2)U34. This is tRNA 5-methylaminomethyl-2-thiouridine biosynthesis bifunctional protein MnmC from Haemophilus influenzae (strain PittGG).